Here is a 317-residue protein sequence, read N- to C-terminus: WSCD family member AAEL009094 (317 aa).

A helical membrane pass occupies residues 8-28; it reads LFGLAGTILVYIGGILFLSFV. Residues Asn-150, Asn-226, and Asn-232 are each glycosylated (N-linked (GlcNAc...) asparagine).

It belongs to the WSCD family.

The protein resides in the membrane. The chain is WSCD family member AAEL009094 from Aedes aegypti (Yellowfever mosquito).